The chain runs to 296 residues: 33 kDa chaperonin (296 aa).

Cystine bridges form between C238–C240 and C271–C274.

The protein belongs to the HSP33 family. Post-translationally, under oxidizing conditions two disulfide bonds are formed involving the reactive cysteines. Under reducing conditions zinc is bound to the reactive cysteines and the protein is inactive.

The protein resides in the cytoplasm. Its function is as follows. Redox regulated molecular chaperone. Protects both thermally unfolding and oxidatively damaged proteins from irreversible aggregation. Plays an important role in the bacterial defense system toward oxidative stress. The sequence is that of 33 kDa chaperonin from Clostridium botulinum (strain Okra / Type B1).